We begin with the raw amino-acid sequence, 412 residues long: Phosphoglycerate kinase, plasmid (412 aa).

Substrate contacts are provided by residues 39–41 (DLN), Arg55, 78–81 (HLGR), Arg133, and Arg166. ATP-binding positions include Lys217, Glu339, and 365-368 (GGDT).

Belongs to the phosphoglycerate kinase family. In terms of assembly, monomer.

It is found in the cytoplasm. The catalysed reaction is (2R)-3-phosphoglycerate + ATP = (2R)-3-phospho-glyceroyl phosphate + ADP. It participates in carbohydrate biosynthesis; Calvin cycle. The chain is Phosphoglycerate kinase, plasmid (cbbKP) from Cupriavidus necator (strain ATCC 17699 / DSM 428 / KCTC 22496 / NCIMB 10442 / H16 / Stanier 337) (Ralstonia eutropha).